The following is a 74-amino-acid chain: Antitoxin VapB39 (74 aa).

Its function is as follows. Antitoxin component of a type II toxin-antitoxin (TA) system. This chain is Antitoxin VapB39 (vapB39), found in Mycobacterium tuberculosis (strain CDC 1551 / Oshkosh).